The sequence spans 109 residues: MAQFEWVHAAWLALAIVLEIIANVFLKFSDGFRRKIFGLLSLAAVLAAFSALSQAVKGIDLSVAYALWGGFGIAATLAAGWILFGQRLNRKGWIGLVLLLAGMIMVKLA.

At Met1 to Glu5 the chain is on the periplasmic side. A helical membrane pass occupies residues Trp6–Leu26. At Lys27–Lys35 the chain is on the cytoplasmic side. A helical transmembrane segment spans residues Ile36–Val56. Residues Lys57 to Val63 are Periplasmic-facing. The helical transmembrane segment at Ala64–Phe84 threads the bilayer. Topologically, residues Gly85–Arg87 are cytoplasmic. The chain crosses the membrane as a helical span at residues Leu88–Leu108. Ala109 is a topological domain (periplasmic).

The protein belongs to the drug/metabolite transporter (DMT) superfamily. Small multidrug resistance (SMR) (TC 2.A.7.1) family. MdtI subfamily. In terms of assembly, forms a complex with MdtJ.

It is found in the cell inner membrane. Its function is as follows. Catalyzes the excretion of spermidine. This chain is Spermidine export protein MdtI (mdtI), found in Escherichia coli O6:H1 (strain CFT073 / ATCC 700928 / UPEC).